Here is a 65-residue protein sequence, read N- to C-terminus: Conotoxin Cal16.1 (65 aa).

Positions 1-19 are cleaved as a signal peptide; the sequence is MRCLSIFVLLVLLVSFAVA. Positions 20–48 are excised as a propeptide; sequence ELDVEGEIVKQLLTRGTLKDADFWKRLEM. Glutamine 49 bears the Pyrrolidone carboxylic acid mark. 2 disulfide bridges follow: cysteine 51–cysteine 60 and cysteine 53–cysteine 61. Glutamate 63 is modified (glutamic acid 1-amide).

As to expression, expressed by the venom duct.

It is found in the secreted. Probable neurotoxin with unknown target. Possibly targets ion channels. The polypeptide is Conotoxin Cal16.1 (Californiconus californicus (California cone)).